Here is a 293-residue protein sequence, read N- to C-terminus: MKFVYTPSEAAEEGVRGPSDLPKLIDKAMSLARAPVSTFKVGAVGLTSSGEVFLGVNVEFPNLPLHHTIHAEQFLVTNLALNSMKKLTHIAVSVTGTIFGAPCGHCRQFYQEMRNAPEIEILIKRPKDGIDEFMSLKSLMPERFGPDSILPEDASLLLEQRDNSLVLSDPEEICSDPEDCSHTKCRALAAANKSYAPYSKCPSGVALICGGEVYKGWYIESVAYNPSLGPVEAALVDFVARGGGKEFNEITEVVLVEMKDVKVSQEATARTFLDKIAPKCDFKVLHCYKTNKN.

CMP/dCMP-type deaminase domains are found at residues 16–147 and 178–293; these read RGPS…FGPD and EDCS…TNKN. 57–59 contacts substrate; sequence NVE. Histidine 70 is a binding site for Zn(2+). Residue glutamate 72 is the Proton donor of the active site. The Zn(2+) site is built by cysteine 103 and cysteine 106.

It belongs to the cytidine and deoxycytidylate deaminase family. As to quaternary structure, homodimer. Zn(2+) serves as cofactor.

The enzyme catalyses cytidine + H2O + H(+) = uridine + NH4(+). The catalysed reaction is 2'-deoxycytidine + H2O + H(+) = 2'-deoxyuridine + NH4(+). This enzyme scavenges exogenous and endogenous cytidine and 2'-deoxycytidine for UMP synthesis. The sequence is that of Cytidine deaminase 6 (CDA6) from Arabidopsis thaliana (Mouse-ear cress).